A 388-amino-acid chain; its full sequence is Succinate--CoA ligase [ADP-forming] subunit beta (388 aa).

The 236-residue stretch at 9-244 folds into the ATP-grasp domain; that stretch reads KEIFRSMGVA…LEEEDPKEIE (236 aa). ATP is bound by residues lysine 46, 53-55, glutamate 99, cysteine 102, and glutamate 107; that span reads GRG. Residues asparagine 199 and aspartate 213 each coordinate Mg(2+). Substrate is bound by residues asparagine 264 and 321–323; that span reads GIM.

Belongs to the succinate/malate CoA ligase beta subunit family. In terms of assembly, heterotetramer of two alpha and two beta subunits. Requires Mg(2+) as cofactor.

It catalyses the reaction succinate + ATP + CoA = succinyl-CoA + ADP + phosphate. It carries out the reaction GTP + succinate + CoA = succinyl-CoA + GDP + phosphate. Its pathway is carbohydrate metabolism; tricarboxylic acid cycle; succinate from succinyl-CoA (ligase route): step 1/1. In terms of biological role, succinyl-CoA synthetase functions in the citric acid cycle (TCA), coupling the hydrolysis of succinyl-CoA to the synthesis of either ATP or GTP and thus represents the only step of substrate-level phosphorylation in the TCA. The beta subunit provides nucleotide specificity of the enzyme and binds the substrate succinate, while the binding sites for coenzyme A and phosphate are found in the alpha subunit. This Staphylococcus epidermidis (strain ATCC 35984 / DSM 28319 / BCRC 17069 / CCUG 31568 / BM 3577 / RP62A) protein is Succinate--CoA ligase [ADP-forming] subunit beta.